The following is a 191-amino-acid chain: ATP synthase subunit b 2 (191 aa).

Over residues 1–12 the composition is skewed to basic and acidic residues; the sequence is MAESHGEAKGGE. The interval 1-31 is disordered; that stretch reads MAESHGEAKGGEAKGTASAHTEAEGGHGFPP. A helical membrane pass occupies residues 38–60; the sequence is PSQIASLVIAFVALYVIVSRVAL.

The protein belongs to the ATPase B chain family. In terms of assembly, F-type ATPases have 2 components, F(1) - the catalytic core - and F(0) - the membrane proton channel. F(1) has five subunits: alpha(3), beta(3), gamma(1), delta(1), epsilon(1). F(0) has three main subunits: a(1), b(2) and c(10-14). The alpha and beta chains form an alternating ring which encloses part of the gamma chain. F(1) is attached to F(0) by a central stalk formed by the gamma and epsilon chains, while a peripheral stalk is formed by the delta and b chains.

It is found in the cell inner membrane. Functionally, f(1)F(0) ATP synthase produces ATP from ADP in the presence of a proton or sodium gradient. F-type ATPases consist of two structural domains, F(1) containing the extramembraneous catalytic core and F(0) containing the membrane proton channel, linked together by a central stalk and a peripheral stalk. During catalysis, ATP synthesis in the catalytic domain of F(1) is coupled via a rotary mechanism of the central stalk subunits to proton translocation. In terms of biological role, component of the F(0) channel, it forms part of the peripheral stalk, linking F(1) to F(0). The b'-subunit is a diverged and duplicated form of b found in plants and photosynthetic bacteria. The polypeptide is ATP synthase subunit b 2 (atpF2) (Bradyrhizobium sp. (strain ORS 278)).